Here is a 177-residue protein sequence, read N- to C-terminus: Flavodoxin (177 aa).

The Flavodoxin-like domain occupies 4–173; sequence IGIFFGSDTG…RIDTWLDKLK (170 aa).

It belongs to the flavodoxin family. FMN is required as a cofactor.

Functionally, low-potential electron donor to a number of redox enzymes. NifF is the electron donor to nitrogenase. This is Flavodoxin (nifF) from Enterobacter agglomerans (Erwinia herbicola).